A 386-amino-acid polypeptide reads, in one-letter code: Phosphoglycerate kinase (386 aa).

Substrate contacts are provided by residues 21–23 (DLN), arginine 36, 59–62 (HLGR), arginine 112, and arginine 145. ATP contacts are provided by residues lysine 196, glutamate 313, and 339 to 342 (GGDT).

This sequence belongs to the phosphoglycerate kinase family. Monomer.

The protein resides in the cytoplasm. The catalysed reaction is (2R)-3-phosphoglycerate + ATP = (2R)-3-phospho-glyceroyl phosphate + ADP. The protein operates within carbohydrate degradation; glycolysis; pyruvate from D-glyceraldehyde 3-phosphate: step 2/5. In Haemophilus influenzae (strain PittEE), this protein is Phosphoglycerate kinase.